A 288-amino-acid chain; its full sequence is Geranylgeranyl diphosphate synthase (288 aa).

Isopentenyl diphosphate is bound by residues arginine 43 and histidine 73. Positions 80 and 86 each coordinate Mg(2+). (2E,6E)-farnesyl diphosphate is bound at residue arginine 91. Arginine 92 provides a ligand contact to isopentenyl diphosphate. Residues lysine 170, threonine 171, and glutamine 205 each contribute to the (2E,6E)-farnesyl diphosphate site.

It belongs to the FPP/GGPP synthase family. Requires Mg(2+) as cofactor.

The catalysed reaction is isopentenyl diphosphate + (2E,6E)-farnesyl diphosphate = (2E,6E,10E)-geranylgeranyl diphosphate + diphosphate. Its pathway is isoprenoid biosynthesis; geranylgeranyl diphosphate biosynthesis; geranylgeranyl diphosphate from farnesyl diphosphate and isopentenyl diphosphate: step 1/1. Functionally, catalyzes the condensation of farnesyl diphosphate (FPP) and isopentenyl diphosphate (IPP) to yield geranylgeranyl diphosphate (GGPP) needed for biosynthesis of carotenoids and diterpenes. The sequence is that of Geranylgeranyl diphosphate synthase (crtE) from Cereibacter sphaeroides (strain ATCC 17023 / DSM 158 / JCM 6121 / CCUG 31486 / LMG 2827 / NBRC 12203 / NCIMB 8253 / ATH 2.4.1.) (Rhodobacter sphaeroides).